We begin with the raw amino-acid sequence, 289 residues long: Energy-coupling factor transporter ATP-binding protein EcfA2 (289 aa).

The region spanning 3-246 is the ABC transporter domain; sequence IEIKDVEHRY…KDDIAALGLD (244 aa). An ATP-binding site is contributed by 40–47; that stretch reads GHTGSGKS.

This sequence belongs to the ABC transporter superfamily. Energy-coupling factor EcfA family. Forms a stable energy-coupling factor (ECF) transporter complex composed of 2 membrane-embedded substrate-binding proteins (S component), 2 ATP-binding proteins (A component) and 2 transmembrane proteins (T component).

It is found in the cell membrane. Functionally, ATP-binding (A) component of a common energy-coupling factor (ECF) ABC-transporter complex. Unlike classic ABC transporters this ECF transporter provides the energy necessary to transport a number of different substrates. The protein is Energy-coupling factor transporter ATP-binding protein EcfA2 of Bacillus licheniformis (strain ATCC 14580 / DSM 13 / JCM 2505 / CCUG 7422 / NBRC 12200 / NCIMB 9375 / NCTC 10341 / NRRL NRS-1264 / Gibson 46).